We begin with the raw amino-acid sequence, 125 residues long: Small ribosomal subunit protein uS12m (125 aa).

Positions 1–24 (MPTSNQSIRHGREKKRRTDRTRAL) are disordered. The span at 9–19 (RHGREKKRRTD) shows a compositional bias: basic residues.

This sequence belongs to the universal ribosomal protein uS12 family.

It localises to the mitochondrion. Functionally, protein S12 is involved in the translation initiation step. This Pinus sylvestris (Scotch pine) protein is Small ribosomal subunit protein uS12m (RPS12).